A 23-amino-acid chain; its full sequence is Maculatin-1.2 (23 aa).

At Ala-23 the chain carries Alanine amide.

In terms of tissue distribution, expressed by the skin dorsal glands.

The protein localises to the secreted. Functionally, shows antibacterial activity against S.aureus and S.uberis. This chain is Maculatin-1.2, found in Ranoidea genimaculata (Brown-spotted tree frog).